The primary structure comprises 183 residues: Inosine triphosphate pyrophosphatase (183 aa).

An ITP-binding site is contributed by 8 to 13 (TGNKNK). Glu36 contributes to the Mg(2+) binding site. ITP contacts are provided by residues Lys48, 64 to 65 (DT), Lys81, 140 to 143 (FGWD), Lys161, and 166 to 167 (HR).

This sequence belongs to the HAM1 NTPase family. As to quaternary structure, homodimer. Requires Mg(2+) as cofactor. The cofactor is Mn(2+).

Its subcellular location is the cytoplasm. It is found in the nucleus. The catalysed reaction is ITP + H2O = IMP + diphosphate + H(+). The enzyme catalyses dITP + H2O = dIMP + diphosphate + H(+). It catalyses the reaction XTP + H2O = XMP + diphosphate + H(+). Its function is as follows. Pyrophosphatase that hydrolyzes non-canonical purine nucleotides such as inosine triphosphate (ITP), deoxyinosine triphosphate (dITP) or xanthosine 5'-triphosphate (XTP) to their respective monophosphate derivatives. The enzyme does not distinguish between the deoxy- and ribose forms. Probably excludes non-canonical purines from RNA and DNA precursor pools, thus preventing their incorporation into RNA and DNA and avoiding chromosomal lesions. This chain is Inosine triphosphate pyrophosphatase, found in Ajellomyces capsulatus (strain G186AR / H82 / ATCC MYA-2454 / RMSCC 2432) (Darling's disease fungus).